The sequence spans 303 residues: Trans-aconitate 2-methyltransferase (303 aa).

A disordered region spans residues 271–303; sequence EGSGGSGGSGGSAGSAGCAGSGGSVGPAGEAGR. The segment covering 272–303 has biased composition (gly residues); the sequence is GSGGSGGSGGSAGSAGCAGSGGSVGPAGEAGR.

It belongs to the methyltransferase superfamily. Tam family.

It localises to the cytoplasm. It carries out the reaction trans-aconitate + S-adenosyl-L-methionine = (E)-3-(methoxycarbonyl)pent-2-enedioate + S-adenosyl-L-homocysteine. Catalyzes the S-adenosylmethionine monomethyl esterification of trans-aconitate. This Streptomyces coelicolor (strain ATCC BAA-471 / A3(2) / M145) protein is Trans-aconitate 2-methyltransferase.